Consider the following 357-residue polypeptide: Protein MGF 360-22R (357 aa).

One copy of the ANK repeat lies at 66–98 (DLNLALMKAVQENNYELIMLFTEWGADINLGLI).

Belongs to the asfivirus MGF 360 family.

Its function is as follows. Plays a role in virus cell tropism, and may be required for efficient virus replication in macrophages. The polypeptide is Protein MGF 360-22R (African swine fever virus (isolate Tick/Malawi/Lil 20-1/1983) (ASFV)).